A 256-amino-acid polypeptide reads, in one-letter code: Small ribosomal subunit protein eS1 (256 aa).

Positions 1–18 (MAVGKNKRLSKGKKGIKK) are enriched in basic residues. The interval 1 to 20 (MAVGKNKRLSKGKKGIKKRT) is disordered. Residue Ala-2 is modified to N-acetylalanine; partial.

The protein belongs to the eukaryotic ribosomal protein eS1 family. In terms of assembly, component of the small ribosomal subunit. Mature ribosomes consist of a small (40S) and a large (60S) subunit. The 40S subunit contains about 33 different proteins and 1 molecule of RNA (18S). The 60S subunit contains about 49 different proteins and 3 molecules of RNA (25S, 5.8S and 5S).

Its subcellular location is the cytoplasm. The sequence is that of Small ribosomal subunit protein eS1 (rps1) from Aspergillus terreus (strain NIH 2624 / FGSC A1156).